The following is a 1345-amino-acid chain: Protein dispatched homolog 2 (1345 aa).

Residues 1–28 (MAPEASPERSCSLHTCPLEDPTGAPVPP) form a disordered region. The chain crosses the membrane as a helical span at residues 125 to 145 (VAVIVGCLAFIFLCTLAGLLG). N-linked (GlcNAc...) asparagine glycans are attached at residues Asn-304 and Asn-420. One can recognise an SSD domain in the interval 429 to 598 (LGLKPRLLKY…LLWLPATVVL (170 aa)). 6 consecutive transmembrane segments (helical) span residues 440-460 (LAEDTMYPLIALVVIFFGMSL), 465-485 (LFITFMSLLGVLGSLMVAYFL), 497-517 (FVNLAALLLLSGVCVNYTLIF), 544-564 (FGYLLLVSGLTTSAAFYGSYL), 572-592 (CFALFMGTAVLVHMGLTLLWL), and 659-679 (YIWICWFAALAAGGAYIGGVS). N-linked (GlcNAc...) asparagine glycosylation occurs at Asn-776. Helical transmembrane passes span 919–939 (PAVVLGLALALAFATLLLSTW), 945–965 (LFSVAAVAGTVLLTVGLLVLL), 974–994 (ALFLSASVGLSVDLTINYCIS), 1019–1039 (AMTTGVLFASGVIMLPSTILL), and 1043–1063 (LGIIVMMVKFLGCGFASFFFQ). 2 disordered regions span residues 1251-1271 (VRVPDSVGTSPEVMNGTGHPI) and 1295-1345 (PNMP…GYSS). Positions 1297–1306 (MPNSHHSSLS) are enriched in polar residues. At Arg-1310 the chain carries Omega-N-methylarginine.

It belongs to the dispatched family.

It is found in the membrane. The protein is Protein dispatched homolog 2 (Disp2) of Mus musculus (Mouse).